The following is a 400-amino-acid chain: NADH-quinone oxidoreductase subunit D (400 aa).

This sequence belongs to the complex I 49 kDa subunit family. As to quaternary structure, NDH-1 is composed of 14 different subunits. Subunits NuoB, C, D, E, F, and G constitute the peripheral sector of the complex.

It localises to the cell inner membrane. It carries out the reaction a quinone + NADH + 5 H(+)(in) = a quinol + NAD(+) + 4 H(+)(out). Functionally, NDH-1 shuttles electrons from NADH, via FMN and iron-sulfur (Fe-S) centers, to quinones in the respiratory chain. The immediate electron acceptor for the enzyme in this species is believed to be a menaquinone. Couples the redox reaction to proton translocation (for every two electrons transferred, four hydrogen ions are translocated across the cytoplasmic membrane), and thus conserves the redox energy in a proton gradient. This chain is NADH-quinone oxidoreductase subunit D, found in Pelodictyon phaeoclathratiforme (strain DSM 5477 / BU-1).